The primary structure comprises 133 residues: Ribosome-binding factor A (133 aa).

This sequence belongs to the RbfA family. In terms of assembly, monomer. Binds 30S ribosomal subunits, but not 50S ribosomal subunits or 70S ribosomes.

The protein localises to the cytoplasm. Functionally, one of several proteins that assist in the late maturation steps of the functional core of the 30S ribosomal subunit. Associates with free 30S ribosomal subunits (but not with 30S subunits that are part of 70S ribosomes or polysomes). Required for efficient processing of 16S rRNA. May interact with the 5'-terminal helix region of 16S rRNA. The sequence is that of Ribosome-binding factor A from Psychromonas ingrahamii (strain DSM 17664 / CCUG 51855 / 37).